We begin with the raw amino-acid sequence, 82 residues long: Mitotic-spindle organizing protein 1 (82 aa).

Alanine 2 is modified (N-acetylalanine).

The protein belongs to the MOZART1 family. As to quaternary structure, associates with the gamma-tubulin ring complex (gTuRC) consisting of TUBGCP2, TUBGCP3, TUBGCP4, TUBGCP5 and TUBGCP6 and gamma-tubulin TUBG1 or TUBG2; within the complex, interacts with TUBGCP3 and TUBGCP6 to form a luminal bridge with actin that stabilizes the initial structure during complex assembly. Interacts with TUBG1.

It localises to the cytoplasm. Its subcellular location is the cytoskeleton. The protein localises to the microtubule organizing center. The protein resides in the centrosome. It is found in the spindle. In terms of biological role, required for the recruitment and the assembly of the gamma-tubulin ring complex (gTuRC) at the centrosome. The gTuRC regulates the minus-end nucleation of alpha-beta tubulin heterodimers that grow into microtubule protafilaments, a critical step in centrosome duplication and spindle formation. The polypeptide is Mitotic-spindle organizing protein 1 (MZT1) (Homo sapiens (Human)).